The chain runs to 287 residues: ATP synthase gamma chain (287 aa).

This sequence belongs to the ATPase gamma chain family. As to quaternary structure, F-type ATPases have 2 components, CF(1) - the catalytic core - and CF(0) - the membrane proton channel. CF(1) has five subunits: alpha(3), beta(3), gamma(1), delta(1), epsilon(1). CF(0) has three main subunits: a, b and c.

The protein resides in the cell inner membrane. In terms of biological role, produces ATP from ADP in the presence of a proton gradient across the membrane. The gamma chain is believed to be important in regulating ATPase activity and the flow of protons through the CF(0) complex. The chain is ATP synthase gamma chain from Cronobacter sakazakii (strain ATCC BAA-894) (Enterobacter sakazakii).